Here is a 369-residue protein sequence, read N- to C-terminus: Peptide chain release factor 2 (369 aa).

Q249 bears the N5-methylglutamine mark.

Belongs to the prokaryotic/mitochondrial release factor family. Methylated by PrmC. Methylation increases the termination efficiency of RF2.

The protein resides in the cytoplasm. Peptide chain release factor 2 directs the termination of translation in response to the peptide chain termination codons UGA and UAA. The protein is Peptide chain release factor 2 of Thermosipho africanus (strain TCF52B).